The primary structure comprises 458 residues: tRNA-2-methylthio-N(6)-dimethylallyladenosine synthase (458 aa).

An MTTase N-terminal domain is found at 2-118 (PKLYIKTYGC…VFEHVDGILR (117 aa)). Cys-11, Cys-47, Cys-81, Cys-170, Cys-174, and Cys-177 together coordinate [4Fe-4S] cluster. Residues 156–389 (PGVRSTAYVS…LAVVNEIAIR (234 aa)) enclose the Radical SAM core domain. Residues 392 to 455 (RDLVGTVQEV…GFTLYGVPCP (64 aa)) enclose the TRAM domain.

This sequence belongs to the methylthiotransferase family. MiaB subfamily. As to quaternary structure, monomer. The cofactor is [4Fe-4S] cluster.

The protein resides in the cytoplasm. The catalysed reaction is N(6)-dimethylallyladenosine(37) in tRNA + (sulfur carrier)-SH + AH2 + 2 S-adenosyl-L-methionine = 2-methylsulfanyl-N(6)-dimethylallyladenosine(37) in tRNA + (sulfur carrier)-H + 5'-deoxyadenosine + L-methionine + A + S-adenosyl-L-homocysteine + 2 H(+). In terms of biological role, catalyzes the methylthiolation of N6-(dimethylallyl)adenosine (i(6)A), leading to the formation of 2-methylthio-N6-(dimethylallyl)adenosine (ms(2)i(6)A) at position 37 in tRNAs that read codons beginning with uridine. This chain is tRNA-2-methylthio-N(6)-dimethylallyladenosine synthase, found in Akkermansia muciniphila (strain ATCC BAA-835 / DSM 22959 / JCM 33894 / BCRC 81048 / CCUG 64013 / CIP 107961 / Muc).